A 109-amino-acid chain; its full sequence is MSASELATSYAALILADEGIEITSDKLLSLTKAGNVEVEPIWATIFAKALEGKDLKELLLNIGSAGAASAPTAAGAGAAAPAEAAEEEKKEEAKEEEESDEDMGFGLFD.

The segment covering 68–83 (ASAPTAAGAGAAAPAE) has biased composition (low complexity). The segment at 68-109 (ASAPTAAGAGAAAPAEAAEEEKKEEAKEEEESDEDMGFGLFD) is disordered. A compositionally biased stretch (acidic residues) spans 94–103 (KEEEESDEDM). Ser-99 carries the phosphoserine modification.

It belongs to the eukaryotic ribosomal protein P1/P2 family. In terms of assembly, component of the large ribosomal subunit (LSU). Mature yeast ribosomes consist of a small (40S) and a large (60S) subunit. The 40S small subunit contains 1 molecule of ribosomal RNA (18S rRNA) and at least 33 different proteins. The large 60S subunit contains 3 rRNA molecules (25S, 5.8S and 5S rRNA) and at least 46 different proteins. The acidic ribosomal P-proteins form the stalk structure of the 60S subunit. They are organized as a pentameric complex in which uL10/P0 interacts with 2 heterodimers of P1 and P2 proteins.

Its subcellular location is the cytoplasm. Functionally, component of the ribosome, a large ribonucleoprotein complex responsible for the synthesis of proteins in the cell. The small ribosomal subunit (SSU) binds messenger RNAs (mRNAs) and translates the encoded message by selecting cognate aminoacyl-transfer RNA (tRNA) molecules. The large subunit (LSU) contains the ribosomal catalytic site termed the peptidyl transferase center (PTC), which catalyzes the formation of peptide bonds, thereby polymerizing the amino acids delivered by tRNAs into a polypeptide chain. The nascent polypeptides leave the ribosome through a tunnel in the LSU and interact with protein factors that function in enzymatic processing, targeting, and the membrane insertion of nascent chains at the exit of the ribosomal tunnel. This Schizosaccharomyces pombe (strain 972 / ATCC 24843) (Fission yeast) protein is Large ribosomal subunit protein P1C (rpp103).